The sequence spans 228 residues: Phosphatidylglycerophosphate phosphatase PTPMT2 (228 aa).

Over residues 1-10 (MTDETEEDDT) the composition is skewed to acidic residues. The disordered stretch occupies residues 1–30 (MTDETEEDDTTQQRSSRNDGVSKNKGKGFK). Substrate contacts are provided by Y48 and D126. A Tyrosine-protein phosphatase domain is found at 66 to 213 (WWDQIDEYLL…VEEFSRLQSP (148 aa)). The active-site Phosphocysteine intermediate is C157. Positions 157-163 (CKAGRGR) match the Glucan phosphatase signature motif CXAGXGR motif. 158-163 (KAGRGR) provides a ligand contact to substrate.

It belongs to the protein-tyrosine phosphatase family. Non-receptor class dual specificity subfamily. As to expression, expressed in roots, leaves, stems and flowers. Expressed at low levels in stems and flowers.

The enzyme catalyses O-phospho-L-seryl-[protein] + H2O = L-seryl-[protein] + phosphate. It catalyses the reaction O-phospho-L-threonyl-[protein] + H2O = L-threonyl-[protein] + phosphate. It carries out the reaction O-phospho-L-tyrosyl-[protein] + H2O = L-tyrosyl-[protein] + phosphate. The catalysed reaction is a 1,2-diacyl-sn-glycero-3-phospho-(1'-sn-glycero-3'-phosphate) + H2O = a 1,2-diacyl-sn-glycero-3-phospho-(1'-sn-glycerol) + phosphate. The protein operates within phospholipid metabolism; phosphatidylglycerol biosynthesis; phosphatidylglycerol from CDP-diacylglycerol: step 2/2. Exhibits phosphatidylglycerophosphate phosphatase activity. Involved in root growth and columella cells organization. May possess protein phosphatase activity. This is Phosphatidylglycerophosphate phosphatase PTPMT2 from Arabidopsis thaliana (Mouse-ear cress).